Here is a 114-residue protein sequence, read N- to C-terminus: Large ribosomal subunit protein bL19 (114 aa).

It belongs to the bacterial ribosomal protein bL19 family.

Its function is as follows. This protein is located at the 30S-50S ribosomal subunit interface and may play a role in the structure and function of the aminoacyl-tRNA binding site. The sequence is that of Large ribosomal subunit protein bL19 from Clavibacter michiganensis subsp. michiganensis (strain NCPPB 382).